The chain runs to 159 residues: Heat shock protein beta-9 (159 aa).

The region spanning 36–147 (LLRDSPAAQE…EAQTGPSPRL (112 aa)) is the sHSP domain.

The protein belongs to the small heat shock protein (HSP20) family. As to expression, testis specific.

It localises to the cytoplasm. Its subcellular location is the nucleus. In Homo sapiens (Human), this protein is Heat shock protein beta-9 (HSPB9).